The chain runs to 349 residues: Putative inosamine-phosphate amidinotransferase 2 (349 aa).

It belongs to the amidinotransferase family.

It catalyses the reaction 1-amino-1-deoxy-scyllo-inositol 4-phosphate + L-arginine = 1-guanidino-1-deoxy-scyllo-inositol 4-phosphate + L-ornithine. It participates in antibiotic biosynthesis; streptomycin biosynthesis. Functionally, it is not obvious if strB2 participates in streptomycin biosynthesis as an inosamine-phosphate amidinotransferase. Attempt to measure its activity have failed and the nucleophilic cysteine which is the key residue for amidine transfer is not conserved but replaced by a glycine residue. This is Putative inosamine-phosphate amidinotransferase 2 (strB2) from Streptomyces griseus.